Here is an 80-residue protein sequence, read N- to C-terminus: Large ribosomal subunit protein bL31B (80 aa).

This sequence belongs to the bacterial ribosomal protein bL31 family. Type B subfamily. Part of the 50S ribosomal subunit.

This chain is Large ribosomal subunit protein bL31B, found in Streptococcus pneumoniae serotype 2 (strain D39 / NCTC 7466).